Here is a 258-residue protein sequence, read N- to C-terminus: Ribonuclease PH (258 aa).

Residues Arg88 and 126 to 128 (GTR) each bind phosphate.

The protein belongs to the RNase PH family. In terms of assembly, homohexameric ring arranged as a trimer of dimers.

It carries out the reaction tRNA(n+1) + phosphate = tRNA(n) + a ribonucleoside 5'-diphosphate. In terms of biological role, phosphorolytic 3'-5' exoribonuclease that plays an important role in tRNA 3'-end maturation. Removes nucleotide residues following the 3'-CCA terminus of tRNAs; can also add nucleotides to the ends of RNA molecules by using nucleoside diphosphates as substrates, but this may not be physiologically important. Probably plays a role in initiation of 16S rRNA degradation (leading to ribosome degradation) during starvation. This Mycobacteroides abscessus (strain ATCC 19977 / DSM 44196 / CCUG 20993 / CIP 104536 / JCM 13569 / NCTC 13031 / TMC 1543 / L948) (Mycobacterium abscessus) protein is Ribonuclease PH.